We begin with the raw amino-acid sequence, 292 residues long: Probable endonuclease LCL3 (292 aa).

A helical transmembrane segment spans residues 41–58 (YFSVAAFAAGSLSLAASY). One can recognise a TNase-like domain in the interval 83-247 (RWIKGRVTSV…KDARRGIWAK (165 aa)). Arginine 132 is an active-site residue. Aspartate 137 is a binding site for Ca(2+). Active-site residues include glutamate 140 and arginine 180. Residues 256–282 (EYKRRYAQAADGGEPPSKARAEKEQKR) are disordered. Basic and acidic residues predominate over residues 272 to 282 (SKARAEKEQKR).

It belongs to the LCL3 family.

The protein resides in the mitochondrion. Its subcellular location is the membrane. This is Probable endonuclease LCL3 (LCL3) from Schizophyllum commune (strain H4-8 / FGSC 9210) (Split gill fungus).